The following is a 242-amino-acid chain: uncharacterized protein (242 aa).

An S4 RNA-binding domain is found at 2-62; that stretch reads EKAYKILSVQ…VEKPSVIFED (61 aa). Aspartate 93 is an active-site residue.

This sequence belongs to the pseudouridine synthase RluA family.

It catalyses the reaction a uridine in RNA = a pseudouridine in RNA. This is an uncharacterized protein from Helicobacter pylori (strain ATCC 700392 / 26695) (Campylobacter pylori).